A 293-amino-acid chain; its full sequence is Bifunctional protein FolD (293 aa).

Residues 165–167, S190, and I231 each bind NADP(+); that span reads GRS.

It belongs to the tetrahydrofolate dehydrogenase/cyclohydrolase family. In terms of assembly, homodimer.

The enzyme catalyses (6R)-5,10-methylene-5,6,7,8-tetrahydrofolate + NADP(+) = (6R)-5,10-methenyltetrahydrofolate + NADPH. The catalysed reaction is (6R)-5,10-methenyltetrahydrofolate + H2O = (6R)-10-formyltetrahydrofolate + H(+). It participates in one-carbon metabolism; tetrahydrofolate interconversion. In terms of biological role, catalyzes the oxidation of 5,10-methylenetetrahydrofolate to 5,10-methenyltetrahydrofolate and then the hydrolysis of 5,10-methenyltetrahydrofolate to 10-formyltetrahydrofolate. This chain is Bifunctional protein FolD, found in Synechococcus sp. (strain CC9902).